Reading from the N-terminus, the 71-residue chain is Bacteriocin carnobacteriocin-A (71 aa).

A propeptide spanning residues 1 to 18 (MNNVKELSIKEMQQVTGG) is cleaved from the precursor. The cysteines at positions 40 and 69 are disulfide-linked.

It is found in the secreted. Functionally, has antibacterial activity. The polypeptide is Bacteriocin carnobacteriocin-A (cbnBA) (Carnobacterium maltaromaticum (Carnobacterium piscicola)).